The sequence spans 548 residues: Asparagine--tRNA ligase, cytoplasmic (548 aa).

The segment at 1 to 25 (MVLAELYVSDREGSDATGDGTKEKP) is disordered. Basic and acidic residues predominate over residues 8 to 25 (VSDREGSDATGDGTKEKP). Phosphoserine is present on S61. Residues 69 to 91 (MWHREQMKSESREKKEAEDSLRR) form a disordered region. Over residues 71–91 (HREQMKSESREKKEAEDSLRR) the composition is skewed to basic and acidic residues. N6-acetyllysine is present on K244. S482 carries the phosphoserine modification. K490 bears the N6-acetyllysine mark.

It belongs to the class-II aminoacyl-tRNA synthetase family. Homodimer.

It localises to the cytoplasm. The enzyme catalyses tRNA(Asn) + L-asparagine + ATP = L-asparaginyl-tRNA(Asn) + AMP + diphosphate + H(+). Catalyzes the attachment of asparagine to tRNA(Asn) in a two-step reaction: asparagine is first activated by ATP to form Asn-AMP and then transferred to the acceptor end of tRNA(Asn). In addition to its essential role in protein synthesis, acts as a signaling molecule that induced migration of CCR3-expressing cells. Has an essential role in the development of the cerebral cortex, being required for proper proliferation of radial glial cells. In Homo sapiens (Human), this protein is Asparagine--tRNA ligase, cytoplasmic.